Reading from the N-terminus, the 291-residue chain is Small ribosomal subunit protein uS3 (291 aa).

A KH type-2 domain is found at 39-110 (IRLEIMKFLK…KISIKIKEVK (72 aa)).

The protein belongs to the universal ribosomal protein uS3 family. Part of the 30S ribosomal subunit. Forms a tight complex with proteins S10 and S14.

Its function is as follows. Binds the lower part of the 30S subunit head. Binds mRNA in the 70S ribosome, positioning it for translation. This chain is Small ribosomal subunit protein uS3, found in Borreliella afzelii (strain PKo) (Borrelia afzelii).